We begin with the raw amino-acid sequence, 104 residues long: Large ribosomal subunit protein uL24 (104 aa).

It belongs to the universal ribosomal protein uL24 family. As to quaternary structure, part of the 50S ribosomal subunit.

Its function is as follows. One of two assembly initiator proteins, it binds directly to the 5'-end of the 23S rRNA, where it nucleates assembly of the 50S subunit. In terms of biological role, one of the proteins that surrounds the polypeptide exit tunnel on the outside of the subunit. This Methylorubrum extorquens (strain PA1) (Methylobacterium extorquens) protein is Large ribosomal subunit protein uL24.